We begin with the raw amino-acid sequence, 300 residues long: tRNA dimethylallyltransferase (300 aa).

ATP is bound at residue 11–18 (GPTAVGKS). 13-18 (TAVGKS) contacts substrate. Positions 35-38 (DSIQ) are interaction with substrate tRNA.

Belongs to the IPP transferase family. Monomer. It depends on Mg(2+) as a cofactor.

The catalysed reaction is adenosine(37) in tRNA + dimethylallyl diphosphate = N(6)-dimethylallyladenosine(37) in tRNA + diphosphate. In terms of biological role, catalyzes the transfer of a dimethylallyl group onto the adenine at position 37 in tRNAs that read codons beginning with uridine, leading to the formation of N6-(dimethylallyl)adenosine (i(6)A). This is tRNA dimethylallyltransferase from Borrelia turicatae (strain 91E135).